The chain runs to 153 residues: Endoribonuclease YbeY (153 aa).

His-116, His-120, and His-126 together coordinate Zn(2+).

The protein belongs to the endoribonuclease YbeY family. It depends on Zn(2+) as a cofactor.

It localises to the cytoplasm. Functionally, single strand-specific metallo-endoribonuclease involved in late-stage 70S ribosome quality control and in maturation of the 3' terminus of the 16S rRNA. This Clavibacter michiganensis subsp. michiganensis (strain NCPPB 382) protein is Endoribonuclease YbeY.